The primary structure comprises 572 residues: Methionine--tRNA ligase (572 aa).

Positions 11–21 (PYINGIKHLGN) match the 'HIGH' region motif. Residues C143, C146, C156, and C159 each coordinate Zn(2+). Positions 346-350 (QFSTS) match the 'KMSKS' region motif. ATP is bound at residue T349.

The protein belongs to the class-I aminoacyl-tRNA synthetase family. MetG type 1 subfamily. In terms of assembly, monomer. Zn(2+) is required as a cofactor.

The protein resides in the cytoplasm. The catalysed reaction is tRNA(Met) + L-methionine + ATP = L-methionyl-tRNA(Met) + AMP + diphosphate. In terms of biological role, is required not only for elongation of protein synthesis but also for the initiation of all mRNA translation through initiator tRNA(fMet) aminoacylation. This is Methionine--tRNA ligase from Roseobacter denitrificans (strain ATCC 33942 / OCh 114) (Erythrobacter sp. (strain OCh 114)).